The following is a 174-amino-acid chain: Late lactation protein B (174 aa).

The first 18 residues, 1 to 18 (MKVLFLTIALSLFSILQA), serve as a signal peptide directing secretion. A disulfide bond links cysteine 77 and cysteine 169.

It belongs to the calycin superfamily. Lipocalin family. Mammary gland specific. Secreted in milk.

Its subcellular location is the secreted. Functionally, probably serves a role in the transport of a small ligand released during the hydrolysis of milk fat. The chain is Late lactation protein B (LLPB) from Notamacropus eugenii (Tammar wallaby).